The following is a 491-amino-acid chain: Cytochrome P450 2F3 (491 aa).

Cys-436 lines the heme pocket.

Belongs to the cytochrome P450 family. It depends on heme as a cofactor. Lung specific.

It is found in the endoplasmic reticulum membrane. Its subcellular location is the microsome membrane. It carries out the reaction an organic molecule + reduced [NADPH--hemoprotein reductase] + O2 = an alcohol + oxidized [NADPH--hemoprotein reductase] + H2O + H(+). Its function is as follows. Bioactivates 3-methylindole (3MI) by dehydrogenation to the putative electrophile 3-methylene-indolenine. Stereoselectively catalyzes the formation of the 1R,2S-oxide from naphthalene. Lack activity with other common P450 substrates including 7-ethoxycoumarin. The protein is Cytochrome P450 2F3 (CYP2F3) of Capra hircus (Goat).